A 233-amino-acid polypeptide reads, in one-letter code: Metallo-beta-lactamase domain-containing protein 1 (233 aa).

The Zn(2+) site is built by histidine 96, histidine 98, aspartate 100, histidine 101, histidine 152, aspartate 174, and histidine 213.

It belongs to the metallo-beta-lactamase superfamily. Glyoxalase II family. In terms of assembly, homodimer. It depends on Zn(2+) as a cofactor.

Its subcellular location is the cytoplasm. The protein resides in the cytosol. It is found in the nucleus. It catalyses the reaction a ribonucleotidyl-ribonucleotide-RNA + H2O = a 3'-end ribonucleotide-RNA + a 5'-end 5'-phospho-ribonucleoside-RNA + H(+). Its function is as follows. Endoribonuclease that catalyzes the hydrolysis of histone-coding pre-mRNA 3'-end. Involved in histone pre-mRNA processing during the S-phase of the cell cycle, which is required for entering/progressing through S-phase. Cleaves histone pre-mRNA at a major and a minor cleavage site after the 5'-ACCCA-3' and the 5'-ACCCACA-3' sequence, respectively, and located downstream of the stem-loop. May require the presence of the HDE element located at the histone pre-RNA 3'-end to avoid non-specific cleavage. This chain is Metallo-beta-lactamase domain-containing protein 1 (mblac1), found in Xenopus laevis (African clawed frog).